Reading from the N-terminus, the 55-residue chain is MAKAVTIKVKLVSSADTGFYYVAKKNSRTMTDKLVKKKYDPVARKHVEFREAKIK.

This sequence belongs to the bacterial ribosomal protein bL33 family.

The chain is Large ribosomal subunit protein bL33 from Bradyrhizobium diazoefficiens (strain JCM 10833 / BCRC 13528 / IAM 13628 / NBRC 14792 / USDA 110).